The chain runs to 73 residues: Methionyl-tRNA formyltransferase (73 aa).

This sequence belongs to the Fmt family.

It carries out the reaction L-methionyl-tRNA(fMet) + (6R)-10-formyltetrahydrofolate = N-formyl-L-methionyl-tRNA(fMet) + (6S)-5,6,7,8-tetrahydrofolate + H(+). Its function is as follows. Attaches a formyl group to the free amino group of methionyl-tRNA(fMet). The formyl group appears to play a dual role in the initiator identity of N-formylmethionyl-tRNA by promoting its recognition by IF2 and preventing the misappropriation of this tRNA by the elongation apparatus. This chain is Methionyl-tRNA formyltransferase (fmt), found in Rickettsia australis.